The primary structure comprises 453 residues: Bifunctional protein GlmU (453 aa).

Residues 1 to 226 (MVAIAILAAG…YEEILGINDR (226 aa)) are pyrophosphorylase. UDP-N-acetyl-alpha-D-glucosamine contacts are provided by residues 7-10 (LAAG), K21, Q73, and 78-79 (GT). A Mg(2+)-binding site is contributed by D103. Residues G140, E155, N170, and N224 each contribute to the UDP-N-acetyl-alpha-D-glucosamine site. N224 contributes to the Mg(2+) binding site. Positions 227 to 247 (KQLALAYQILQNRIKDQAMAA) are linker. The tract at residues 248–453 (GVTLIDPDSI…GWRLKQPDPT (206 aa)) is N-acetyltransferase. UDP-N-acetyl-alpha-D-glucosamine contacts are provided by R329 and K347. The Proton acceptor role is filled by H359. The UDP-N-acetyl-alpha-D-glucosamine site is built by Y362 and N373. Residues A376, 382–383 (NY), S401, A419, and R436 each bind acetyl-CoA.

In the N-terminal section; belongs to the N-acetylglucosamine-1-phosphate uridyltransferase family. The protein in the C-terminal section; belongs to the transferase hexapeptide repeat family. As to quaternary structure, homotrimer. It depends on Mg(2+) as a cofactor.

The protein localises to the cytoplasm. The catalysed reaction is alpha-D-glucosamine 1-phosphate + acetyl-CoA = N-acetyl-alpha-D-glucosamine 1-phosphate + CoA + H(+). It catalyses the reaction N-acetyl-alpha-D-glucosamine 1-phosphate + UTP + H(+) = UDP-N-acetyl-alpha-D-glucosamine + diphosphate. It functions in the pathway nucleotide-sugar biosynthesis; UDP-N-acetyl-alpha-D-glucosamine biosynthesis; N-acetyl-alpha-D-glucosamine 1-phosphate from alpha-D-glucosamine 6-phosphate (route II): step 2/2. The protein operates within nucleotide-sugar biosynthesis; UDP-N-acetyl-alpha-D-glucosamine biosynthesis; UDP-N-acetyl-alpha-D-glucosamine from N-acetyl-alpha-D-glucosamine 1-phosphate: step 1/1. It participates in bacterial outer membrane biogenesis; LPS lipid A biosynthesis. Functionally, catalyzes the last two sequential reactions in the de novo biosynthetic pathway for UDP-N-acetylglucosamine (UDP-GlcNAc). The C-terminal domain catalyzes the transfer of acetyl group from acetyl coenzyme A to glucosamine-1-phosphate (GlcN-1-P) to produce N-acetylglucosamine-1-phosphate (GlcNAc-1-P), which is converted into UDP-GlcNAc by the transfer of uridine 5-monophosphate (from uridine 5-triphosphate), a reaction catalyzed by the N-terminal domain. The chain is Bifunctional protein GlmU from Cyanothece sp. (strain PCC 7425 / ATCC 29141).